Consider the following 276-residue polypeptide: Large ribosomal subunit protein uL2 (276 aa).

The tract at residues 203 to 276 is disordered; sequence NVSSGKAGRT…SDKFIVKRRK (74 aa). Over residues 210-220 the composition is skewed to basic residues; the sequence is GRTRWLGRRPQ. Positions 265–276 are enriched in basic and acidic residues; the sequence is KPSDKFIVKRRK.

Belongs to the universal ribosomal protein uL2 family. In terms of assembly, part of the 50S ribosomal subunit. Forms a bridge to the 30S subunit in the 70S ribosome.

Its function is as follows. One of the primary rRNA binding proteins. Required for association of the 30S and 50S subunits to form the 70S ribosome, for tRNA binding and peptide bond formation. It has been suggested to have peptidyltransferase activity; this is somewhat controversial. Makes several contacts with the 16S rRNA in the 70S ribosome. This is Large ribosomal subunit protein uL2 from Coprothermobacter proteolyticus (strain ATCC 35245 / DSM 5265 / OCM 4 / BT).